The sequence spans 920 residues: Anillin-related medial ring protein mid1 (920 aa).

Residues 1 to 452 form a disordered region; it reads MKEQEFSYRE…LSSEDLRHPS (452 aa). Phosphoserine is present on residues Ser15 and Ser24. Thr34 is subject to Phosphothreonine. 2 positions are modified to phosphoserine: Ser46 and Ser62. Positions 69 to 81 match the Nuclear export sequence (NES) 1 motif; that stretch reads LNVATDLLESLDL. Ser95 is modified (phosphoserine). The span at 461–481 shows a compositional bias: polar residues; it reads RTYSNYCENEPNKSSQSLVSS. Ser531 carries the post-translational modification Phosphoserine. The tract at residues 538–561 is disordered; that stretch reads DLPSQDKSTSYEVPNGTENQSPRP. The segment covering 542–561 has biased composition (polar residues); the sequence is QDKSTSYEVPNGTENQSPRP. Residues 551-920 are cryptic lipid-binding C2 domain; it reads PNGTENQSPR…WLQEYVNFMA (370 aa). Positions 681-710 match the Nuclear localization sequence (NLS) motif; it reads RKFFDKLFNRRKKRKLNKAAAVENSKAKKS. The short motif at 763-773 is the Nuclear export sequence (NES) 2 element; it reads LGNLTLTCLYI. Residues 802–901 enclose the PH domain; the sequence is LYNEGYLYRL…WLQVMNSRSF (100 aa).

Homodimer. Interacts with blt1 and cdr2. Interacts with gef2. Interacts with plo1 and rng2. Interacts with fhk2 and sep1. Interacts with clp1. Phosphorylated. At the onset of mitosis, becomes hyperphosphorylated, leaves the nucleus, and forms a medial ring. Phosphorylation by plo1 and other kinases may contribute to solubilizing mid1 for export from the nucleus. Phosphorylation by sid2 drives removal from the cortex at the actomyosin contractile ring constriction onset.

It localises to the nucleus. The protein resides in the cytoplasm. The protein localises to the cell cortex. Its subcellular location is the cytoskeleton. Functionally, scaffold protein that anchors the contractile ring (CR) at the cell equator during cytokinesis. At the onset of mitosis, membrane-bound oligomers of mid1 assemble recruitment platforms for cytokinetic ring components at the medial cortex and stabilize the ring position during its compaction. Recruits dephosphorylated myo2, but also rng2, clp1 and cdc15 to nodes and to place cytokinetic nodes around the cell equator the medial cortex to promote the ring assembly in cooperation with F-actin. Necessary to stabilize the mitotic spindle perpendicular to the axis of cell division. Also recruits the cdr2 kinase to the CR. In terms of biological role, in the nucleus, binds to the promoter regions of M-G1 transcribed genes to negatively regulate their expression. In Schizosaccharomyces pombe (strain 972 / ATCC 24843) (Fission yeast), this protein is Anillin-related medial ring protein mid1.